A 64-amino-acid chain; its full sequence is Large ribosomal subunit protein uL29 (64 aa).

Belongs to the universal ribosomal protein uL29 family.

In Ralstonia pickettii (strain 12J), this protein is Large ribosomal subunit protein uL29.